The following is a 1583-amino-acid chain: Transcriptional activator GLI3 (1583 aa).

M1 carries the post-translational modification N-acetylmethionine. Polar residues-rich tracts occupy residues 1–10 (MEAQAHSSTA) and 58–78 (ITMQ…PSTS). Residues 1-78 (MEAQAHSSTA…NKISEEPSTS (78 aa)) are disordered. At R175 the chain carries Omega-N-methylarginine. A disordered region spans residues 368-475 (QSLGSAFGHS…DKDESKQEPE (108 aa)). A compositionally biased stretch (low complexity) spans 403–421 (VQVSSGPSESSQSKPTSES). K438 is covalently cross-linked (Glycyl lysine isopeptide (Lys-Gly) (interchain with G-Cter in SUMO2)). Polar residues predominate over residues 448–457 (SRGQQEQPEG). Residues 461–474 (VKEEADKDESKQEP) are compositionally biased toward basic and acidic residues. K462 participates in a covalent cross-link: Glycyl lysine isopeptide (Lys-Gly) (interchain with G-Cter in SUMO2). C2H2-type zinc fingers lie at residues 480-505 (TNCH…NNDH), 513-540 (FVCR…MRRH), 546-570 (HKCT…LRSH), 576-601 (YVCE…NRTH), and 607-632 (YVCK…KTVH). The tract at residues 620-728 (DPSSLRKHVK…PISNYSNSGL (109 aa)) is disordered. Residues 632–648 (HGPEAHVTKKQRGDMHP) show a composition bias toward basic and acidic residues. S664 carries the phosphoserine modification. A compositionally biased stretch (basic and acidic residues) spans 684–699 (SKREECLQVKTVKAEK). The segment covering 703-726 (SQPSPGGQSSCSSQQSPISNYSNS) has biased composition (low complexity). A mediates interaction with DZIP1 region spans residues 745-845 (DETPIMDSTI…VDFTVLNTLN (101 aa)). K773 is covalently cross-linked (Glycyl lysine isopeptide (Lys-Gly) (interchain with G-Cter in ubiquitin)). K779 is covalently cross-linked (Glycyl lysine isopeptide (Lys-Gly) (interchain with G-Cter in SUMO2); alternate). A Glycyl lysine isopeptide (Lys-Gly) (interchain with G-Cter in ubiquitin); alternate cross-link involves residue K779. Residues K784 and K800 each participate in a glycyl lysine isopeptide (Lys-Gly) (interchain with G-Cter in ubiquitin) cross-link. The segment at 809-828 (GNGTQSNNNYSSGGPGTLLP) is disordered. Polar residues predominate over residues 810–820 (NGTQSNNNYSS). Residues S849, S865, S877, S907, S980, and S1006 each carry the phosphoserine; by PKA modification. Positions 863–880 (RSSGISPCFSSRRSSEAS) are enriched in low complexity. A disordered region spans residues 863–918 (RSSGISPCFSSRRSSEASQAEGRPQNVSVADSYDPISTDASRRSSEASQGDGLPSL). The interval 1164–1189 (EVSSGTSDLSSSKLKCGQQRPSAQQP) is disordered. The segment covering 1166 to 1175 (SSGTSDLSSS) has biased composition (low complexity).

Belongs to the GLI C2H2-type zinc-finger protein family. As to quaternary structure, the phosphorylated form interacts with BTRC. The full-length GLI3 form (GLI3FL) interacts with SUFU and this interaction regulates the formation of either repressor or activator forms of GLI3. Its association with SUFU is regulated by Hh signaling and dissociation of the SUFU-GLI3 interaction requires the presence of the ciliary motor KIF3A. Interacts with KIF7. The activator form of GLI3 (GLI3A) but not the repressor form (GLI3R) can interact with TRPS1. Interacts with ZIC1. Interacts with ZIC3 (via C2H2-type domains 3, 4 and 5); the interaction enhances its transcriptional activity. Interacts with WRD11; the interaction associates EMX1 with GLI3. Interacts with DZIP1; retains GLI3 within the cytoplasm. Phosphorylated by DYRK2 (in vitro). Phosphorylated on multiple sites by protein kinase A (PKA) and phosphorylation by PKA primes further phosphorylation by CK1 and GSK3. Phosphorylation is essential for its proteolytic processing. In terms of processing, transcriptional repressor GLI3R, a C-terminally truncated form, is generated from the full-length GLI3 protein (GLI3FL/GLI3-190) through proteolytic processing. This process requires PKA-primed phosphorylation of GLI3, ubiquitination of GLI3 and the presence of BTRC. GLI3FL is complexed with SUFU in the cytoplasm and is maintained in a neutral state. Without the Hh signal, the SUFU-GLI3 complex is recruited to cilia, leading to the efficient processing of GLI3FL into GLI3R. GLI3R formation leads to its dissociation from SUFU, allowing it to translocate into the nucleus, and repress Hh target genes. When Hh signaling is initiated, SUFU dissociates from GLI3FL and this has two consequences. First, GLI3R production is halted. Second, free GLI3FL translocates to the nucleus, where it is phosphorylated, destabilized, and converted to a transcriptional activator (GLI3A). Phosphorylated in vitro by ULK3.

The protein localises to the nucleus. It is found in the cytoplasm. It localises to the cell projection. Its subcellular location is the cilium. Has a dual function as a transcriptional activator and a repressor of the sonic hedgehog (Shh) pathway, and plays a role in limb development. The full-length GLI3 form (GLI3FL) after phosphorylation and nuclear translocation, acts as an activator (GLI3A) while GLI3R, its C-terminally truncated form, acts as a repressor. A proper balance between the GLI3 activator and the repressor GLI3R, rather than the repressor gradient itself or the activator/repressor ratio gradient, specifies limb digit number and identity. In concert with TRPS1, plays a role in regulating the size of the zone of distal chondrocytes, in restricting the zone of PTHLH expression in distal cells and in activating chondrocyte proliferation. Binds to the minimal GLI-consensus sequence 5'-GGGTGGTC-3'. In Mus musculus (Mouse), this protein is Transcriptional activator GLI3 (Gli3).